A 546-amino-acid polypeptide reads, in one-letter code: MGSRNSSSAGTGSGDPSEGLPRRGAGLRRSEEEEEEDEDVDLAQVLAYLLRRGQVRLVQGGGAANLQLIQALSDSEEEHDSAWDGRLGDRYNPPVDATPDTRELECSEIKTQVELATGRLGLRRAARELSFPQMLHQRERGLCHQGSFSLGERSRVMSHFLPNDLGFTDTYSQKAFCGIYSKDGQIFMSACQDQTIRLYDCRYGRFRKFKSIKARDVGWSVLDVAFTPDGNHFLYSSWSDYIHICNIYGEGDTHTALDLRPDERRFAVFSIAVSSDGREVLGGANDGCLYVFDREQNRRTLQIESHEDDVNAVAFADVSSQILFSGGDDAICKVWDRRTMREDDPKPVGALAGHQDGITFIDSKGDARYLISNSKDQTIKLWDIRRFSSREGMEASRQAATQQNWDYRWQQVPKKAWRKLKLPGDSSLMTYRGHGVLHTLIRCRFSPTHSTGQQFIYSGCSTGKVVVYDLLSGHVVKKLTTHKACVRDVSWHPFEEKIVSSSWDGNLRLWQYRQAEYFQDDMPESEEHPSTPAPMSHPSTAFSSPQ.

A compositionally biased stretch (polar residues) spans 1 to 10 (MGSRNSSSAG). The segment at 1-40 (MGSRNSSSAGTGSGDPSEGLPRRGAGLRRSEEEEEEDEDV) is disordered. S73 and S75 each carry phosphoserine. Positions 79–100 (HDSAWDGRLGDRYNPPVDATPD) are disordered. Residues 80–89 (DSAWDGRLGD) are compositionally biased toward basic and acidic residues. 7 WD repeats span residues 170–210 (TYSQ…RKFK), 216–258 (DVGW…TALD), 263–302 (ERRFAVFSIAVSSDGREVLGGANDGCLYVFDREQNRRTLQ), 305–345 (SHED…EDDP), 353–392 (GHQDGITFIDSKGDARYLISNSKDQTIKLWDIRRFSSREG), 435–480 (GVLH…KKLT), and 481–520 (THKACVRDVSWHPFEEKIVSSSWDGNLRLWQYRQAEYFQD). The segment at 521 to 546 (DMPESEEHPSTPAPMSHPSTAFSSPQ) is disordered. Positions 537 to 546 (HPSTAFSSPQ) are enriched in polar residues.

In terms of assembly, interacts with DDB1 and CUL4A.

It participates in protein modification; protein ubiquitination. May function as a substrate receptor for CUL4-DDB1 E3 ubiquitin-protein ligase complex. The chain is DDB1- and CUL4-associated factor 11 (DCAF11) from Bos taurus (Bovine).